Consider the following 475-residue polypeptide: Aspartyl/glutamyl-tRNA(Asn/Gln) amidotransferase subunit B (475 aa).

It belongs to the GatB/GatE family. GatB subfamily. As to quaternary structure, heterotrimer of A, B and C subunits.

The enzyme catalyses L-glutamyl-tRNA(Gln) + L-glutamine + ATP + H2O = L-glutaminyl-tRNA(Gln) + L-glutamate + ADP + phosphate + H(+). It carries out the reaction L-aspartyl-tRNA(Asn) + L-glutamine + ATP + H2O = L-asparaginyl-tRNA(Asn) + L-glutamate + ADP + phosphate + 2 H(+). Allows the formation of correctly charged Asn-tRNA(Asn) or Gln-tRNA(Gln) through the transamidation of misacylated Asp-tRNA(Asn) or Glu-tRNA(Gln) in organisms which lack either or both of asparaginyl-tRNA or glutaminyl-tRNA synthetases. The reaction takes place in the presence of glutamine and ATP through an activated phospho-Asp-tRNA(Asn) or phospho-Glu-tRNA(Gln). The sequence is that of Aspartyl/glutamyl-tRNA(Asn/Gln) amidotransferase subunit B from Macrococcus caseolyticus (strain JCSC5402) (Macrococcoides caseolyticum).